A 156-amino-acid polypeptide reads, in one-letter code: Ribosomal RNA large subunit methyltransferase H (156 aa).

S-adenosyl-L-methionine-binding positions include Leu73, Gly104, and 123 to 128 (LSALTL).

Belongs to the RNA methyltransferase RlmH family. Homodimer.

It is found in the cytoplasm. The enzyme catalyses pseudouridine(1915) in 23S rRNA + S-adenosyl-L-methionine = N(3)-methylpseudouridine(1915) in 23S rRNA + S-adenosyl-L-homocysteine + H(+). Its function is as follows. Specifically methylates the pseudouridine at position 1915 (m3Psi1915) in 23S rRNA. This Vibrio vulnificus (strain CMCP6) protein is Ribosomal RNA large subunit methyltransferase H.